We begin with the raw amino-acid sequence, 421 residues long: Lipid II:glycine glycyltransferase (421 aa).

This sequence belongs to the FemABX family. As to quaternary structure, monomer.

The protein localises to the cytoplasm. The catalysed reaction is beta-D-GlcNAc-(1-&gt;4)-Mur2Ac(oyl-L-Ala-D-isoglutaminyl-L-Lys-D-Ala-D-Ala)-di-trans,octa-cis-undecaprenyl diphosphate + glycyl-tRNA(Gly) = beta-D-GlcNAc-(1-&gt;4)-Mur2Ac(oyl-L-Ala-D-isoglutaminyl-L-Lys-(N(6)-Gly)-D-Ala-D-Ala)-di-trans,octa-cis-undecaprenyl diphosphate + tRNA(Gly) + H(+). Functionally, catalyzes the incorporation of the first glycine of the pentaglycine interpeptide bridge, which is characteristic of the S.aureus peptidoglycan. This glycine is added to the epsilon-amino group of the L-lysine of the membrane-bound lipid II intermediate (GlcNAc-(beta-1,4)-N-acetylmuramic acid(-L-Ala-D-iGln-L-Lys-D-Ala-D-Ala)-pyrophosphoryl-undecaprenol), using glycyl-tRNA(Gly) as donor, in a ribosome-independent mechanism. Involved in methicillin resistance. This Staphylococcus aureus (strain Mu50 / ATCC 700699) protein is Lipid II:glycine glycyltransferase (femX).